Reading from the N-terminus, the 297-residue chain is uncharacterized protein (297 aa).

It belongs to the metallo-dependent hydrolases superfamily.

This is an uncharacterized protein from Sinorhizobium fredii (strain NBRC 101917 / NGR234).